Here is a 728-residue protein sequence, read N- to C-terminus: 1,4-alpha-glucan branching enzyme GlgB (728 aa).

D405 serves as the catalytic Nucleophile. E458 functions as the Proton donor in the catalytic mechanism.

Belongs to the glycosyl hydrolase 13 family. GlgB subfamily. In terms of assembly, monomer.

It catalyses the reaction Transfers a segment of a (1-&gt;4)-alpha-D-glucan chain to a primary hydroxy group in a similar glucan chain.. The protein operates within glycan biosynthesis; glycogen biosynthesis. Its function is as follows. Catalyzes the formation of the alpha-1,6-glucosidic linkages in glycogen by scission of a 1,4-alpha-linked oligosaccharide from growing alpha-1,4-glucan chains and the subsequent attachment of the oligosaccharide to the alpha-1,6 position. The sequence is that of 1,4-alpha-glucan branching enzyme GlgB from Shigella dysenteriae serotype 1 (strain Sd197).